A 204-amino-acid chain; its full sequence is ATP-dependent Clp protease proteolytic subunit (204 aa).

The Nucleophile role is filled by Ser-102. His-127 is an active-site residue.

It belongs to the peptidase S14 family. In terms of assembly, fourteen ClpP subunits assemble into 2 heptameric rings which stack back to back to give a disk-like structure with a central cavity, resembling the structure of eukaryotic proteasomes.

It localises to the cytoplasm. The catalysed reaction is Hydrolysis of proteins to small peptides in the presence of ATP and magnesium. alpha-casein is the usual test substrate. In the absence of ATP, only oligopeptides shorter than five residues are hydrolyzed (such as succinyl-Leu-Tyr-|-NHMec, and Leu-Tyr-Leu-|-Tyr-Trp, in which cleavage of the -Tyr-|-Leu- and -Tyr-|-Trp bonds also occurs).. In terms of biological role, cleaves peptides in various proteins in a process that requires ATP hydrolysis. Has a chymotrypsin-like activity. Plays a major role in the degradation of misfolded proteins. The chain is ATP-dependent Clp protease proteolytic subunit from Neisseria gonorrhoeae (strain ATCC 700825 / FA 1090).